Consider the following 142-residue polypeptide: Tol-Pal system protein TolR (142 aa).

Residues 1–17 (MARARGRGRRDLKSEIN) lie on the Cytoplasmic side of the membrane. The helical transmembrane segment at 18–38 (IVPLLDVLLVLLLIFMATAPI) threads the bilayer. Over 39-142 (ITQSVEVDLP…KSVGLMTQPI (104 aa)) the chain is Periplasmic.

Belongs to the ExbD/TolR family. The Tol-Pal system is composed of five core proteins: the inner membrane proteins TolA, TolQ and TolR, the periplasmic protein TolB and the outer membrane protein Pal. They form a network linking the inner and outer membranes and the peptidoglycan layer.

It localises to the cell inner membrane. In terms of biological role, part of the Tol-Pal system, which plays a role in outer membrane invagination during cell division and is important for maintaining outer membrane integrity. Required, with TolQ, for the proton motive force-dependent activation of TolA and for TolA-Pal interaction. This chain is Tol-Pal system protein TolR, found in Escherichia coli O157:H7.